The primary structure comprises 305 residues: MNRLLKTIIENNRKWISEGKVASYIPELSKMDKNLLGISVCTLGGEEYWEGDAEVKFTIQSISKIVTLMLAIIDNGEDYVFSKVGMEPTETAFNSIVNLEAKESHKPINPMINAGAIVVASMVAGKDSDEKFDRILKFTRKISGNNNIDINLNVYKSEKETGHRNRALAYFMKSTGALKGNVEEILDVYFKQCSIEITCKDLARIGVMLANDGVSPYTGDRIVPRHVARIVKTIMVTCGMYDASGNFAVHIGIPAKSGVGGGIVACAPRRMGIGVLGTALDEKGNSIAGTKILEELSKQLDLSIF.

S61, N113, E158, N165, Y189, Y241, and V259 together coordinate substrate.

This sequence belongs to the glutaminase family. As to quaternary structure, homotetramer.

It catalyses the reaction L-glutamine + H2O = L-glutamate + NH4(+). The chain is Glutaminase from Clostridium botulinum (strain Kyoto / Type A2).